A 355-amino-acid chain; its full sequence is Probable sugar phosphate/phosphate translocator At3g10290 (355 aa).

A disordered region spans residues 19–51 (QKKQPNLSISSTTKMNKKNPDQKSDMSSSSSSP). The segment covering 22-32 (QPNLSISSTTK) has biased composition (polar residues). A run of 10 helical transmembrane segments spans residues 55 to 75 (TLFI…VLLL), 89 to 109 (IFLT…SIVF), 124 to 144 (FLKV…GNIS), 150 to 170 (VSFN…FAYI), 177 to 197 (AWVT…ASGG), 198 to 218 (EPGF…ARAF), 239 to 259 (LMLY…IFME), 277 to 297 (YILL…NFLV), 305 to 325 (TLQV…ILLF), and 328 to 348 (PVTV…VAYG).

The protein belongs to the TPT transporter family. TPT (TC 2.A.7.9) subfamily.

Its subcellular location is the membrane. The polypeptide is Probable sugar phosphate/phosphate translocator At3g10290 (Arabidopsis thaliana (Mouse-ear cress)).